A 75-amino-acid chain; its full sequence is Translational regulator CsrA (75 aa).

The protein belongs to the CsrA/RsmA family. As to quaternary structure, homodimer; the beta-strands of each monomer intercalate to form a hydrophobic core, while the alpha-helices form wings that extend away from the core.

Its subcellular location is the cytoplasm. Its function is as follows. A translational regulator that binds mRNA to regulate translation initiation and/or mRNA stability. Usually binds in the 5'-UTR at or near the Shine-Dalgarno sequence preventing ribosome-binding, thus repressing translation. Its main target seems to be the major flagellin gene, while its function is anatagonized by FliW. This chain is Translational regulator CsrA, found in Treponema denticola (strain ATCC 35405 / DSM 14222 / CIP 103919 / JCM 8153 / KCTC 15104).